Here is a 78-residue protein sequence, read N- to C-terminus: Small ribosomal subunit protein uS17 (78 aa).

Belongs to the universal ribosomal protein uS17 family. As to quaternary structure, part of the 30S ribosomal subunit.

In terms of biological role, one of the primary rRNA binding proteins, it binds specifically to the 5'-end of 16S ribosomal RNA. This chain is Small ribosomal subunit protein uS17, found in Allorhizobium ampelinum (strain ATCC BAA-846 / DSM 112012 / S4) (Agrobacterium vitis (strain S4)).